We begin with the raw amino-acid sequence, 254 residues long: Probable transcriptional regulatory protein MAE_13580 (254 aa).

This sequence belongs to the TACO1 family.

It localises to the cytoplasm. This Microcystis aeruginosa (strain NIES-843 / IAM M-2473) protein is Probable transcriptional regulatory protein MAE_13580.